A 40-amino-acid chain; its full sequence is Sulfur globule protein TR0 (40 aa).

To C.vinosum CV1 and CV2. The protein envelope of the sulfur globules is composed of the three different proteins TR0, TR1 and TR2.

In terms of biological role, structural protein of the sulfur globules, which are intracellular globules that serve for sulfur storage in purple sulfur bacteria. The chain is Sulfur globule protein TR0 from Thiocapsa roseopersicina.